The sequence spans 1046 residues: MTSLSIQPFPEISRMARDLDSRKKRRISLDGIAALCEHSKEIIDSLPMLNSPDYFLKPCINELVEREIESPDYCSRVPDFTIGRIGYGYIRFLGNTDVRRLDLDHIVKFHRHEVIVYDDESSKPVVGEGLNKAAEVTLVVNIPDLTWGKQQVNHIAYKLKQSTERQGATFISFDPDNGLWKFFVPHFSRFGLSDDEAEDIAMDDAPGLGDPVGLDGKKVADIDEEDQMETSELELSHSLPAHLGLDPEKMKEMRMLMFPNEDEDESEDFREQTSHLMTSLTKRNVRPSQKIAQRNSHQDPPPVVRKTPLALLEYNPGNDKSSPGSILMVQQNKNLAVRKSKTGGFELDISHVTPLTDNYSRNVVDAALFMGRSFRAGWGPNGVLFHTGKPICSSSSQMVLSSVINKEKIAIDKVVWDRKGKVQKELIDSAFEAPLSLHKELNHVEEEVRFGSFSLKLQNVVTDRVVLSDICRSYIGIIEKQLEVAGLSTSAKLFLMHQVMVWELIKVLFSERQSTERLMYAASDNEEDVMQDVKEDSAKIDTEALPLIRRAEFSCWLQESVSHRVQEDVSDLNGSSYLEHLFFLLTGRELDSAVELAISKGDVRLACLLSQAGGSTVNRNDILQQLHLWRRNGLDFNFIEKERIKLYELLAGNIHDALQDFTIDWKRFLGLLMWHHLPPDSSLPIIFRSYQLLLNQAKAPWPVPIYIDEGPADGFVSDNKHSDILYYLMLLHSKEEEEFGFLQTMFSAFSSTDDPLDYHMIWHHRGILEAVGAFTSDDLHTLDMGFVAQLLSQGLCHWAIYVVLHIPFREDHPYLHVTVIREILFQYCETWSSMESQRQFIKDLGIPSEWMHEALAVYYNYHGDFVKALDQFIECANWQRAHSIFMTSVAHSLFLSANHSEIWRIATSMDDRKSEIENWDLGAGIYMSFYLLKSSLQEDADTMVELEPLDSTNESCRNFVGRLNESLAVWGDRLPVEARVAYSKMAEEICDLLLSDLSKNPSRETQLTCFETAFDAPLPEDVRSTHLQDAVSLFSLYLSETGQISA.

One can recognise a Peptidase S59 domain in the interval 51-187; that stretch reads SPDYFLKPCI…GLWKFFVPHF (137 aa). Positions 283 to 295 are enriched in polar residues; sequence RNVRPSQKIAQRN. Positions 283 to 304 are disordered; that stretch reads RNVRPSQKIAQRNSHQDPPPVV. Position 523 is a phosphoserine (Ser-523).

In terms of assembly, part of the nuclear pore complex (NPC). The NPC has an eight-fold symmetrical structure comprising a central transport channel and two rings, the cytoplasmic and nuclear rings, to which eight filaments are attached. The cytoplasmic filaments have loose ends, while the nuclear filaments are joined in a distal ring, forming a nuclear basket. NPCs are highly dynamic in configuration and composition, and can be devided in 3 subcomplexes, the NUP62 subcomplex, the NUP107-160 subcomplex and the NUP93 subcomplex, containing approximately 30 different nucleoporin proteins. In terms of tissue distribution, expressed in roots, leaves, stems, flowers and siliques.

It localises to the nucleus membrane. It is found in the nucleus. The protein localises to the nuclear pore complex. Contributes to the transfer of mature mRNA from the nucleus to the cytosol. Required for both R gene-mediated and basal disease resistance. RNA export seems to play a critical role in stress responses and regulation of plant growth and development. In Arabidopsis thaliana (Mouse-ear cress), this protein is Nuclear pore complex protein NUP96.